Consider the following 348-residue polypeptide: uncharacterized protein (348 aa).

In terms of biological role, may be involved in apoptosis regulation. This is an uncharacterized protein from Rattus norvegicus (Rat).